Reading from the N-terminus, the 906-residue chain is Alanine--tRNA ligase (906 aa).

Residues His-570, His-574, Cys-674, and His-678 each contribute to the Zn(2+) site.

This sequence belongs to the class-II aminoacyl-tRNA synthetase family. Requires Zn(2+) as cofactor.

The protein resides in the cytoplasm. It catalyses the reaction tRNA(Ala) + L-alanine + ATP = L-alanyl-tRNA(Ala) + AMP + diphosphate. Its function is as follows. Catalyzes the attachment of alanine to tRNA(Ala) in a two-step reaction: alanine is first activated by ATP to form Ala-AMP and then transferred to the acceptor end of tRNA(Ala). Also edits incorrectly charged Ser-tRNA(Ala) and Gly-tRNA(Ala) via its editing domain. This is Alanine--tRNA ligase from Ureaplasma parvum serovar 3 (strain ATCC 27815 / 27 / NCTC 11736).